The sequence spans 242 residues: Triosephosphate isomerase (242 aa).

9–11 (NWK) contacts substrate. H96 acts as the Electrophile in catalysis. The active-site Proton acceptor is E165. Residues G171, S204, and 225–226 (GG) contribute to the substrate site.

This sequence belongs to the triosephosphate isomerase family. As to quaternary structure, homodimer.

Its subcellular location is the cytoplasm. The catalysed reaction is D-glyceraldehyde 3-phosphate = dihydroxyacetone phosphate. Its pathway is carbohydrate biosynthesis; gluconeogenesis. It participates in carbohydrate degradation; glycolysis; D-glyceraldehyde 3-phosphate from glycerone phosphate: step 1/1. Involved in the gluconeogenesis. Catalyzes stereospecifically the conversion of dihydroxyacetone phosphate (DHAP) to D-glyceraldehyde-3-phosphate (G3P). The polypeptide is Triosephosphate isomerase (Synechocystis sp. (strain ATCC 27184 / PCC 6803 / Kazusa)).